The following is a 199-amino-acid chain: Secreted chorismate mutase (199 aa).

The N-terminal stretch at 1–33 (MLTRPREIYLATAVSIGILLSLIAPLGPPLARA) is a signal peptide. Residues 34–113 (DGTSQLAELV…ATEAIEYSRF (80 aa)) enclose the Chorismate mutase domain. Substrate-binding positions include R49, K60, D69, 72–76 (RVEQQ), 105–109 (TEAIE), and R134. Residues C160 and C193 are joined by a disulfide bond.

In terms of assembly, homodimer.

It localises to the secreted. It carries out the reaction chorismate = prephenate. It functions in the pathway metabolic intermediate biosynthesis; prephenate biosynthesis; prephenate from chorismate: step 1/1. Tyrosine, phenylalanine, and tryptophan moderately enhance chorismate mutase activity at low concentrations, but allosterically inhibit the enzyme at higher concentrations. Catalyzes the Claisen rearrangement of chorismate to prephenate. May play some role in the pathogenicity. In Mycobacterium tuberculosis (strain ATCC 25618 / H37Rv), this protein is Secreted chorismate mutase.